The following is a 705-amino-acid chain: Polyribonucleotide nucleotidyltransferase (705 aa).

2 residues coordinate Mg(2+): Asp-494 and Asp-500. The 60-residue stretch at 561–620 (PRITTVKVKPEKVRAVIGTGGKNIRQIVSETGVTIDVEDDGTVTIASSDMEASARAIAMV) folds into the KH domain. One can recognise an S1 motif domain in the interval 630–698 (GKIYRGTVKK…KQGKIRLSRK (69 aa)).

The protein belongs to the polyribonucleotide nucleotidyltransferase family. Mg(2+) serves as cofactor.

It localises to the cytoplasm. It carries out the reaction RNA(n+1) + phosphate = RNA(n) + a ribonucleoside 5'-diphosphate. Its function is as follows. Involved in mRNA degradation. Catalyzes the phosphorolysis of single-stranded polyribonucleotides processively in the 3'- to 5'-direction. This chain is Polyribonucleotide nucleotidyltransferase, found in Syntrophus aciditrophicus (strain SB).